The primary structure comprises 142 residues: Large ribosomal subunit protein uL13 (142 aa).

It belongs to the universal ribosomal protein uL13 family. As to quaternary structure, part of the 50S ribosomal subunit.

Functionally, this protein is one of the early assembly proteins of the 50S ribosomal subunit, although it is not seen to bind rRNA by itself. It is important during the early stages of 50S assembly. This is Large ribosomal subunit protein uL13 from Pseudomonas fluorescens (strain Pf0-1).